Reading from the N-terminus, the 234-residue chain is Large ribosomal subunit protein bL25 (234 aa).

Residues methionine 1–arginine 24 form a disordered region.

This sequence belongs to the bacterial ribosomal protein bL25 family. CTC subfamily. Part of the 50S ribosomal subunit; part of the 5S rRNA/L5/L18/L25 subcomplex. Contacts the 5S rRNA. Binds to the 5S rRNA independently of L5 and L18.

Functionally, this is one of the proteins that binds to the 5S RNA in the ribosome where it forms part of the central protuberance. The sequence is that of Large ribosomal subunit protein bL25 from Rhodopseudomonas palustris (strain BisB5).